Consider the following 433-residue polypeptide: Actin-related protein 4 (433 aa).

The interval 289 to 317 (GSDEEMNEEPSKPIEQTENNEVSQQDSSV) is disordered. Residues 302–317 (IEQTENNEVSQQDSSV) show a composition bias toward polar residues.

It belongs to the actin family. ARP4 subfamily. Component of the NuA4 histone acetyltransferase complex, of the INO80 chromatin remodeling complex, and of the SWR1 chromatin remodeling complex.

Its subcellular location is the nucleus. In terms of biological role, chromatin interaction component of the NuA4 histone acetyltransferase complex which is involved in transcriptional activation of selected genes principally by acetylation of nucleosomal histone H4 and H2A. The NuA4 complex is also involved in DNA repair. Is required for NuA4 complex integrity. Component of the SWR1 complex which mediates the ATP-dependent exchange of histone H2A for the H2A variant HZT1 leading to transcriptional regulation of selected genes by chromatin remodeling. Component of the INO80 complex which remodels chromatin by shifting nucleosomes and is involved in DNA repair. This Schizosaccharomyces pombe (strain 972 / ATCC 24843) (Fission yeast) protein is Actin-related protein 4 (alp5).